Reading from the N-terminus, the 274-residue chain is Histone H1.1 (274 aa).

Disordered regions lie at residues 1–63 (MSEV…SSHP) and 129–155 (PSAS…PATV). N-acetylserine is present on serine 2. Residues 16–25 (TAADAPVTDA) are compositionally biased toward low complexity. Over residues 40–49 (NVKEVKEKKT) the composition is skewed to basic and acidic residues. Residues 61-130 (SHPTYEEMIK…KVKASFKLPS (70 aa)) enclose the H15 domain. The span at 129–145 (PSASAKASSPKAAAEKS) shows a compositional bias: low complexity. A Glycyl lysine isopeptide (Lys-Gly) (interchain with G-Cter in ubiquitin) cross-link involves residue lysine 161. 2 disordered regions span residues 167–233 (ASKA…PAKK) and 249–274 (KTPV…RVKK). 2 stretches are compositionally biased toward low complexity: residues 175 to 185 (AVKPKTAAAKK) and 221 to 233 (AAKT…PAKK).

This sequence belongs to the histone H1/H5 family.

It is found in the nucleus. The protein localises to the chromosome. Histones H1 are necessary for the condensation of nucleosome chains into higher-order structures. The sequence is that of Histone H1.1 from Arabidopsis thaliana (Mouse-ear cress).